The sequence spans 887 residues: Protein PTHB1 (887 aa).

The interval 1–407 is seven-bladed beta-propeller; the sequence is MSLFKARDWW…SQGVWPMTER (407 aa). The tract at residues 685 to 765 is interaction with LZTL1; the sequence is KDKTPAPLQH…FLPLQEDTQE (81 aa). The interval 850 to 887 is disordered; the sequence is DLEERSVEQDSTELFTNHRHLTAETPRPEVSPLQGVSE.

In terms of assembly, part of BBSome complex, that contains BBS1, BBS2, BBS4, BBS5, BBS7, BBS8/TTC8, BBS9 and BBIP10. Interacts with LZTL1; the interaction mediates the association of LZTL1 with the BBsome complex and regulates BBSome ciliary trafficking. In terms of tissue distribution, widely expressed. Expressed in adult heart, skeletal muscle, lung, liver, kidney, placenta and brain, and in fetal kidney, lung, liver and brain.

Its subcellular location is the cytoplasm. It localises to the cytoskeleton. The protein localises to the microtubule organizing center. It is found in the centrosome. The protein resides in the cell projection. Its subcellular location is the cilium membrane. It localises to the centriolar satellite. Functionally, the BBSome complex is thought to function as a coat complex required for sorting of specific membrane proteins to the primary cilia. The BBSome complex is required for ciliogenesis but is dispensable for centriolar satellite function. This ciliogenic function is mediated in part by the Rab8 GDP/GTP exchange factor, which localizes to the basal body and contacts the BBSome. Rab8(GTP) enters the primary cilium and promotes extension of the ciliary membrane. Firstly the BBSome associates with the ciliary membrane and binds to RAB3IP/Rabin8, the guanosyl exchange factor (GEF) for Rab8 and then the Rab8-GTP localizes to the cilium and promotes docking and fusion of carrier vesicles to the base of the ciliary membrane. Required for proper BBSome complex assembly and its ciliary localization. This Homo sapiens (Human) protein is Protein PTHB1 (BBS9).